The following is a 353-amino-acid chain: RNA 3'-terminal phosphate cyclase (353 aa).

ATP contacts are provided by residues Gln-100 and 289 to 292 (HMSD). Catalysis depends on His-315, which acts as the Tele-AMP-histidine intermediate.

Belongs to the RNA 3'-terminal cyclase family. Type 1 subfamily.

It localises to the cytoplasm. The enzyme catalyses a 3'-end 3'-phospho-ribonucleotide-RNA + ATP = a 3'-end 2',3'-cyclophospho-ribonucleotide-RNA + AMP + diphosphate. Functionally, catalyzes the conversion of 3'-phosphate to a 2',3'-cyclic phosphodiester at the end of RNA. The mechanism of action of the enzyme occurs in 3 steps: (A) adenylation of the enzyme by ATP; (B) transfer of adenylate to an RNA-N3'P to produce RNA-N3'PP5'A; (C) and attack of the adjacent 2'-hydroxyl on the 3'-phosphorus in the diester linkage to produce the cyclic end product. The biological role of this enzyme is unknown but it is likely to function in some aspects of cellular RNA processing. In Ignicoccus hospitalis (strain KIN4/I / DSM 18386 / JCM 14125), this protein is RNA 3'-terminal phosphate cyclase.